A 147-amino-acid chain; its full sequence is MKVLLIKDVKSLGKAGEVKEVKDGYGQNFLIAKGFAKAATHEVLKQYEAEQKKKAENLRFELANLEKLKEELSKITICIAKPVGANGSLFGGITKDEIAHALKEQKNIEIDKKSLECDTIKELGMHEISIKLGHAIHAKFKLEVKGE.

This sequence belongs to the bacterial ribosomal protein bL9 family.

Functionally, binds to the 23S rRNA. In Campylobacter lari (strain RM2100 / D67 / ATCC BAA-1060), this protein is Large ribosomal subunit protein bL9.